The chain runs to 206 residues: Recombination protein RecR (206 aa).

Residues 60-75 form a C4-type zinc finger; it reads CAMCNTFCEGGLCDIC. A Toprim domain is found at 83 to 178; sequence RRLMVVHMPA…KVSRLSQGIP (96 aa).

The protein belongs to the RecR family.

May play a role in DNA repair. It seems to be involved in an RecBC-independent recombinational process of DNA repair. It may act with RecF and RecO. The protein is Recombination protein RecR of Neisseria meningitidis serogroup B (strain ATCC BAA-335 / MC58).